The sequence spans 127 residues: Small ribosomal subunit protein uS11 (127 aa).

It belongs to the universal ribosomal protein uS11 family. As to quaternary structure, part of the 30S ribosomal subunit. Interacts with proteins S7 and S18. Binds to IF-3.

Functionally, located on the platform of the 30S subunit, it bridges several disparate RNA helices of the 16S rRNA. Forms part of the Shine-Dalgarno cleft in the 70S ribosome. This chain is Small ribosomal subunit protein uS11, found in Rickettsia prowazekii (strain Madrid E).